The sequence spans 220 residues: Large ribosomal subunit protein uL16 (220 aa).

This sequence belongs to the universal ribosomal protein uL16 family. As to quaternary structure, component of the small ribosomal subunit. Mature ribosomes consist of a small (40S) and a large (60S) subunit. The 40S subunit contains about 33 different proteins and 1 molecule of RNA (18S). The 60S subunit contains about 49 different proteins and 3 molecules of RNA (25S, 5.8S and 5S).

In Euphorbia esula (Leafy spurge), this protein is Large ribosomal subunit protein uL16 (RPL10).